Here is a 694-residue protein sequence, read N- to C-terminus: Elongation factor G (694 aa).

The tr-type G domain maps to Glu-8–Val-287. GTP is bound by residues Ala-17–Thr-24, Asp-86–His-90, and Asn-140–Asp-143.

Belongs to the TRAFAC class translation factor GTPase superfamily. Classic translation factor GTPase family. EF-G/EF-2 subfamily.

Its subcellular location is the cytoplasm. Functionally, catalyzes the GTP-dependent ribosomal translocation step during translation elongation. During this step, the ribosome changes from the pre-translocational (PRE) to the post-translocational (POST) state as the newly formed A-site-bound peptidyl-tRNA and P-site-bound deacylated tRNA move to the P and E sites, respectively. Catalyzes the coordinated movement of the two tRNA molecules, the mRNA and conformational changes in the ribosome. The polypeptide is Elongation factor G (Bartonella quintana (strain Toulouse) (Rochalimaea quintana)).